Consider the following 263-residue polypeptide: MAASAASGPSAQLAVRVIPCLDVAAGRVVKGVNFLDLQDAGDPVELARLYYEQGADELTFLDVTATVEDRSTMYDVVSATAEQVFIPLTVGGGVRSADDVARLLASGADKIGVNSAAIARPDLVGEIADRFGAQVCVLSLDITRGDTESGFVVTTHGGRTRTTIDAVAWAREAVERGAGELLVNSIDADGTRDGFDLELVAAMRAASRVPVIASGGAGELDHFAPAIEAGADAVLAASVFHSRRFTIGDVKGALADAGQVVRR.

Residues Asp22 and Asp141 contribute to the active site.

The protein belongs to the HisA/HisF family. As to quaternary structure, heterodimer of HisH and HisF.

The protein resides in the cytoplasm. The enzyme catalyses 5-[(5-phospho-1-deoxy-D-ribulos-1-ylimino)methylamino]-1-(5-phospho-beta-D-ribosyl)imidazole-4-carboxamide + L-glutamine = D-erythro-1-(imidazol-4-yl)glycerol 3-phosphate + 5-amino-1-(5-phospho-beta-D-ribosyl)imidazole-4-carboxamide + L-glutamate + H(+). It participates in amino-acid biosynthesis; L-histidine biosynthesis; L-histidine from 5-phospho-alpha-D-ribose 1-diphosphate: step 5/9. Functionally, IGPS catalyzes the conversion of PRFAR and glutamine to IGP, AICAR and glutamate. The HisF subunit catalyzes the cyclization activity that produces IGP and AICAR from PRFAR using the ammonia provided by the HisH subunit. The protein is Imidazole glycerol phosphate synthase subunit HisF of Clavibacter michiganensis subsp. michiganensis (strain NCPPB 382).